We begin with the raw amino-acid sequence, 114 residues long: Ferritin-like protein (114 aa).

Fe cation contacts are provided by glutamate 29, glutamate 59, and histidine 62. A cargo-loading peptide region spans residues 86–114; the sequence is FTDKPITEIEEETSGGSENTGGDLGIRKL. The segment at 94–114 is disordered; sequence IEEETSGGSENTGGDLGIRKL. The segment covering 103–114 has biased composition (gly residues); the sequence is ENTGGDLGIRKL.

This sequence belongs to the ferritin-like superfamily. As to quaternary structure, probably forms a decamer which binds to the pentameric axis of the interior of the protein shell; as the Flp cargo protein is flexible, packing into the shell is not rigid. 3, 4 or 5 cargo decamers bind inside the encapulin nanocompartment. It depends on Fe cation as a cofactor.

It is found in the encapsulin nanocompartment. In terms of biological role, cargo protein of a type 1 encapsulin nanocompartment. A ferritin-like protein that probably stores iron in the encapsulin nanocompartment. This chain is Ferritin-like protein, found in Thermotoga maritima (strain ATCC 43589 / DSM 3109 / JCM 10099 / NBRC 100826 / MSB8).